A 447-amino-acid polypeptide reads, in one-letter code: MREIISIHIGQAGIQVGNACWELYCLEHGIQQDGTMPSDTTVGVAHDAFNTFFSETGAGKHVPRAIFVDLEPTVIDEVRTGAYRQLFHPEQLISGKEDAANNFARGHYTVGKEIVDLCLGRVRQLADNCTGLQGFLVFNAVGGGTGSGLGSLLLERLSVDYGKKSKLGFTIYPSPQVSTAVVEPYNSVLSTHSLLEHTDVAVLLDNEAIYDICRRSLDIERPTYTNLNRLISQIISSLTTSLRFDGAINVDVTEFQTNLVPYPRIHFMLSSYAPVISAEKAYHEQLSVPEITNAVFEPSSMMAKCDPRHGKYMACCLMYRGDVVPKDVNAAVVTIKTKRTVQFVDXCPTGFKCGINYQPPSVVPGGDLAKVQRAVCMISNNTAVAEVFSRIDHKFDLMYAKRAFVHWYVGEGMEEGEFSEAREDLAXLEKXYEEVGAEGADDEVTRG.

Residues Gln-11, Glu-71, Gly-144, Thr-145, Thr-179, Asn-206, and Asn-228 each coordinate GTP. Glu-71 contacts Mg(2+). The active site involves Glu-254.

It belongs to the tubulin family. In terms of assembly, dimer of alpha and beta chains. A typical microtubule is a hollow water-filled tube with an outer diameter of 25 nm and an inner diameter of 15 nM. Alpha-beta heterodimers associate head-to-tail to form protofilaments running lengthwise along the microtubule wall with the beta-tubulin subunit facing the microtubule plus end conferring a structural polarity. Microtubules usually have 13 protofilaments but different protofilament numbers can be found in some organisms and specialized cells. Mg(2+) is required as a cofactor.

The protein localises to the cytoplasm. The protein resides in the cytoskeleton. It catalyses the reaction GTP + H2O = GDP + phosphate + H(+). Tubulin is the major constituent of microtubules, a cylinder consisting of laterally associated linear protofilaments composed of alpha- and beta-tubulin heterodimers. Microtubules grow by the addition of GTP-tubulin dimers to the microtubule end, where a stabilizing cap forms. Below the cap, tubulin dimers are in GDP-bound state, owing to GTPase activity of alpha-tubulin. The chain is Tubulin alpha chain (TUBA) from Avena sativa (Oat).